The chain runs to 329 residues: D-alanine--D-alanine ligase (329 aa).

The region spanning 120–326 (KLWLSAIGIP…FADYLEQILR (207 aa)) is the ATP-grasp domain. Residue 150–205 (ALAKWGKVFIKAASQGSSVGCYSASNEADLVKGIADAFGYSEQVLIEKAVKPRELE) participates in ATP binding. Mg(2+) is bound by residues Asp-280, Glu-293, and Asn-295.

Belongs to the D-alanine--D-alanine ligase family. Requires Mg(2+) as cofactor. The cofactor is Mn(2+).

The protein resides in the cytoplasm. The catalysed reaction is 2 D-alanine + ATP = D-alanyl-D-alanine + ADP + phosphate + H(+). It participates in cell wall biogenesis; peptidoglycan biosynthesis. Cell wall formation. The sequence is that of D-alanine--D-alanine ligase from Aeromonas hydrophila subsp. hydrophila (strain ATCC 7966 / DSM 30187 / BCRC 13018 / CCUG 14551 / JCM 1027 / KCTC 2358 / NCIMB 9240 / NCTC 8049).